The sequence spans 185 residues: Elongation factor P (185 aa).

Belongs to the elongation factor P family.

It is found in the cytoplasm. The protein operates within protein biosynthesis; polypeptide chain elongation. In terms of biological role, involved in peptide bond synthesis. Stimulates efficient translation and peptide-bond synthesis on native or reconstituted 70S ribosomes in vitro. Probably functions indirectly by altering the affinity of the ribosome for aminoacyl-tRNA, thus increasing their reactivity as acceptors for peptidyl transferase. This is Elongation factor P from Limosilactobacillus fermentum (strain NBRC 3956 / LMG 18251) (Lactobacillus fermentum).